The primary structure comprises 240 residues: Uridylate cyclase (240 aa).

The region spanning 45–180 (TYLYADMANS…RAPNLAAKLS (136 aa)) is the Guanylate cyclase domain. Tyr48 is an a ribonucleoside 5'-triphosphate binding site. Positions 50 and 94 each coordinate Mn(2+). Position 95 (Arg95) interacts with a ribonucleoside 5'-triphosphate.

This sequence belongs to the adenylyl cyclase class-4/guanylyl cyclase family. Pyrimidine cyclase subfamily. In terms of assembly, homodimer. The cofactor is Mn(2+).

The protein resides in the cytoplasm. The catalysed reaction is UTP = 3',5'-cyclic UMP + diphosphate. In terms of biological role, pycsar (pyrimidine cyclase system for antiphage resistance) provides immunity against bacteriophage. The pyrimidine cyclase (PycC) synthesizes cyclic nucleotides in response to infection; these serve as specific second messenger signals. The signals activate the adjacent effector, leading to bacterial cell death and abortive phage infection. A clade B Pycsar system. Functionally, the pyrimidine cyclase gene of a two-gene Pycsar system, weakly generates cyclic UMP (cUMP) from UTP, has little to no activity on ATP, CTP or GTP. Expression of this and adjacent effector RsmPycTM (AC A0A1V0HUU2) probably confers resistance to bacteriophage. The genes are probably only expressed in response to bacteriophage infection. This chain is Uridylate cyclase, found in Rhodovulum sp. (strain MB263).